Reading from the N-terminus, the 341-residue chain is UDP-3-O-acylglucosamine N-acyltransferase (341 aa).

H241 serves as the catalytic Proton acceptor.

The protein belongs to the transferase hexapeptide repeat family. LpxD subfamily. In terms of assembly, homotrimer.

The enzyme catalyses a UDP-3-O-[(3R)-3-hydroxyacyl]-alpha-D-glucosamine + a (3R)-hydroxyacyl-[ACP] = a UDP-2-N,3-O-bis[(3R)-3-hydroxyacyl]-alpha-D-glucosamine + holo-[ACP] + H(+). It participates in bacterial outer membrane biogenesis; LPS lipid A biosynthesis. Its function is as follows. Catalyzes the N-acylation of UDP-3-O-acylglucosamine using 3-hydroxyacyl-ACP as the acyl donor. Is involved in the biosynthesis of lipid A, a phosphorylated glycolipid that anchors the lipopolysaccharide to the outer membrane of the cell. The polypeptide is UDP-3-O-acylglucosamine N-acyltransferase (Christiangramia forsetii (strain DSM 17595 / CGMCC 1.15422 / KT0803) (Gramella forsetii)).